The sequence spans 147 residues: D-aminoacyl-tRNA deacylase (147 aa).

The short motif at 137-138 is the Gly-cisPro motif, important for rejection of L-amino acids element; sequence GP.

It belongs to the DTD family. Homodimer.

The protein resides in the cytoplasm. The enzyme catalyses glycyl-tRNA(Ala) + H2O = tRNA(Ala) + glycine + H(+). The catalysed reaction is a D-aminoacyl-tRNA + H2O = a tRNA + a D-alpha-amino acid + H(+). Its function is as follows. An aminoacyl-tRNA editing enzyme that deacylates mischarged D-aminoacyl-tRNAs. Also deacylates mischarged glycyl-tRNA(Ala), protecting cells against glycine mischarging by AlaRS. Acts via tRNA-based rather than protein-based catalysis; rejects L-amino acids rather than detecting D-amino acids in the active site. By recycling D-aminoacyl-tRNA to D-amino acids and free tRNA molecules, this enzyme counteracts the toxicity associated with the formation of D-aminoacyl-tRNA entities in vivo and helps enforce protein L-homochirality. In Bacillus velezensis (strain DSM 23117 / BGSC 10A6 / LMG 26770 / FZB42) (Bacillus amyloliquefaciens subsp. plantarum), this protein is D-aminoacyl-tRNA deacylase.